Here is a 251-residue protein sequence, read N- to C-terminus: Aspartate/glutamate leucyltransferase (251 aa).

The protein belongs to the R-transferase family. Bpt subfamily.

It localises to the cytoplasm. The enzyme catalyses N-terminal L-glutamyl-[protein] + L-leucyl-tRNA(Leu) = N-terminal L-leucyl-L-glutamyl-[protein] + tRNA(Leu) + H(+). It carries out the reaction N-terminal L-aspartyl-[protein] + L-leucyl-tRNA(Leu) = N-terminal L-leucyl-L-aspartyl-[protein] + tRNA(Leu) + H(+). Functionally, functions in the N-end rule pathway of protein degradation where it conjugates Leu from its aminoacyl-tRNA to the N-termini of proteins containing an N-terminal aspartate or glutamate. The protein is Aspartate/glutamate leucyltransferase of Stenotrophomonas maltophilia (strain K279a).